A 24-amino-acid chain; its full sequence is Metallothionein (24 aa).

Cd(2+) contacts are provided by cysteine 3, cysteine 5, cysteine 8, cysteine 10, cysteine 17, cysteine 19, and cysteine 22.

It belongs to the metallothionein superfamily. Type 8 family. Contains 4 disulfide bonds.

Functionally, metallothioneins have a high content of cysteine residues that bind various heavy metals. This is Metallothionein from Neonectria lugdunensis (Aquatic fungus).